The sequence spans 265 residues: Probable cyclic nucleotide phosphodiesterase SynWH7803_1390 (265 aa).

Asp9, His11, Asp49, Asn86, His157, His196, and His198 together coordinate Fe cation. AMP contacts are provided by residues His11, Asp49, and 86–87; that span reads NH. His198 lines the AMP pocket.

The protein belongs to the cyclic nucleotide phosphodiesterase class-III family. Requires Fe(2+) as cofactor.

This Synechococcus sp. (strain WH7803) protein is Probable cyclic nucleotide phosphodiesterase SynWH7803_1390.